We begin with the raw amino-acid sequence, 381 residues long: GDP-mannose transporter (381 aa).

Over 1-40 the chain is Cytoplasmic; sequence MADDKKTNDYTVEMDKLDQGSKNFEAPLPPVQPRSAPNAQ. The chain crosses the membrane as a helical span at residues 41–61; sequence LANNPILPVLAYCGSSIMMTV. The Lumenal segment spans residues 62-71; that stretch reads MNKYVLSGTD. The helical transmembrane segment at 72–92 threads the bilayer; sequence FNLNFLLLCVQSIVCIVAIQT. Residues 93–110 are Cytoplasmic-facing; the sequence is CKASKLITYRDFNADEAK. A helical transmembrane segment spans residues 111-127; that stretch reads KWFPITLLLIGMIYTGS. Over 128–134 the chain is Lumenal; that stretch reads KALQFLS. The chain crosses the membrane as a helical span at residues 135–151; that stretch reads IPVYTIFKNLTIILIAY. At 152–160 the chain is on the cytoplasmic side; sequence GEVLWFGGS. The helical transmembrane segment at 161 to 182 threads the bilayer; the sequence is VTGLTLFSFGLMVLSSIIAAWA. The Lumenal portion of the chain corresponds to 183 to 200; it reads DIKHAVESSGDATAKVST. Residues 201-221 traverse the membrane as a helical segment; it reads LNAGYIWMLINCLCTSSYVLG. Over 222–233 the chain is Cytoplasmic; that stretch reads MRKRIKLTNFKD. The helical transmembrane segment at 234–254 threads the bilayer; it reads FDTMFYNNLLSIPVLLVLTFL. At 255–274 the chain is on the lumenal side; that stretch reads MEDWSSANITRNFPPADRNG. Asparagine 262 carries N-linked (GlcNAc...) asparagine glycosylation. A helical membrane pass occupies residues 275–295; that stretch reads IMFAMILSGLSSVFISYTSAW. Residues 296-303 lie on the Cytoplasmic side of the membrane; that stretch reads CVRVTSST. The helical transmembrane segment at 304–324 threads the bilayer; the sequence is TYSMVGALNKLPIAVSGLIFF. Residues 325–327 lie on the Lumenal side of the membrane; sequence DAP. A helical transmembrane segment spans residues 328–348; the sequence is VTFPSVSAIVVGFVSGIVYAV. At 349-381 the chain is on the cytoplasmic side; the sequence is AKIKQNAKPKTGVLPTSNPVSASSQSMRDSLRS. Positions 362–381 are disordered; sequence LPTSNPVSASSQSMRDSLRS.

The protein belongs to the TPT transporter family. SLC35D subfamily. In terms of assembly, homooligomer.

It localises to the golgi apparatus membrane. The protein localises to the cytoplasmic vesicle membrane. The protein resides in the endoplasmic reticulum membrane. Its function is as follows. Involved in the import of GDP-mannose from the cytoplasm into the Golgi lumen. This Aspergillus clavatus (strain ATCC 1007 / CBS 513.65 / DSM 816 / NCTC 3887 / NRRL 1 / QM 1276 / 107) protein is GDP-mannose transporter (gmt1).